Here is a 305-residue protein sequence, read N- to C-terminus: MVTEFIFLGLSDSQELQTFLFMLFFVFYGGIVFGNLLIVITVVSDSHLHSPMYFLLANLSLIDLSLSSVTAPKMITDFFSQRKVISFKGCLVQIFLLHFFGGSEMVILIAMGFDRYIAICKPLHYTTIMCGNACVGIMAVTWGIGFLHSVSQLAFAVHLLFCGPNEVDSFYCDLPRVIKLACTDTYRLDIMVIANSGVLTVCSFVLLIISYTIILMTIQHRPLDKSSKALSTLTAHITVVLLFFGPCVFIYAWPFPIKSLDKFLAVFYSVITPLLNPIIYTLRNKDMKTAIRQLRKWDAHSSVKF.

Topologically, residues 1–18 (MVTEFIFLGLSDSQELQT) are extracellular. Residues 19–42 (FLFMLFFVFYGGIVFGNLLIVITV) traverse the membrane as a helical segment. Topologically, residues 43–50 (VSDSHLHS) are cytoplasmic. Residues 51–72 (PMYFLLANLSLIDLSLSSVTAP) traverse the membrane as a helical segment. Residues 73–93 (KMITDFFSQRKVISFKGCLVQ) are Extracellular-facing. Cys-90 and Cys-182 form a disulfide bridge. The helical transmembrane segment at 94–113 (IFLLHFFGGSEMVILIAMGF) threads the bilayer. Residues 114 to 132 (DRYIAICKPLHYTTIMCGN) lie on the Cytoplasmic side of the membrane. The chain crosses the membrane as a helical span at residues 133 to 151 (ACVGIMAVTWGIGFLHSVS). Topologically, residues 152–188 (QLAFAVHLLFCGPNEVDSFYCDLPRVIKLACTDTYRL) are extracellular. A helical transmembrane segment spans residues 189–212 (DIMVIANSGVLTVCSFVLLIISYT). At 213 to 228 (IILMTIQHRPLDKSSK) the chain is on the cytoplasmic side. Residues 229–251 (ALSTLTAHITVVLLFFGPCVFIY) form a helical membrane-spanning segment. The Extracellular segment spans residues 252–262 (AWPFPIKSLDK). The helical transmembrane segment at 263-282 (FLAVFYSVITPLLNPIIYTL) threads the bilayer. The Cytoplasmic portion of the chain corresponds to 283–305 (RNKDMKTAIRQLRKWDAHSSVKF).

It belongs to the G-protein coupled receptor 1 family.

Its subcellular location is the cell membrane. Odorant receptor. This chain is Olfactory receptor 4F5 (OR4F5), found in Homo sapiens (Human).